A 390-amino-acid chain; its full sequence is Probable tRNA sulfurtransferase (390 aa).

The 104-residue stretch at 58-161 (EAVARRLQRV…DEGAYIYSRI (104 aa)) folds into the THUMP domain. Residues 179 to 180 (LI), 204 to 205 (HF), arginine 261, glycine 283, and glutamine 292 contribute to the ATP site.

It belongs to the ThiI family.

The protein localises to the cytoplasm. It carries out the reaction [ThiI sulfur-carrier protein]-S-sulfanyl-L-cysteine + a uridine in tRNA + 2 reduced [2Fe-2S]-[ferredoxin] + ATP + H(+) = [ThiI sulfur-carrier protein]-L-cysteine + a 4-thiouridine in tRNA + 2 oxidized [2Fe-2S]-[ferredoxin] + AMP + diphosphate. It catalyses the reaction [ThiS sulfur-carrier protein]-C-terminal Gly-Gly-AMP + S-sulfanyl-L-cysteinyl-[cysteine desulfurase] + AH2 = [ThiS sulfur-carrier protein]-C-terminal-Gly-aminoethanethioate + L-cysteinyl-[cysteine desulfurase] + A + AMP + 2 H(+). It participates in cofactor biosynthesis; thiamine diphosphate biosynthesis. Its function is as follows. Catalyzes the ATP-dependent transfer of a sulfur to tRNA to produce 4-thiouridine in position 8 of tRNAs, which functions as a near-UV photosensor. Also catalyzes the transfer of sulfur to the sulfur carrier protein ThiS, forming ThiS-thiocarboxylate. This is a step in the synthesis of thiazole, in the thiamine biosynthesis pathway. The sulfur is donated as persulfide by IscS. This chain is Probable tRNA sulfurtransferase, found in Moorella thermoacetica (strain ATCC 39073 / JCM 9320).